A 182-amino-acid polypeptide reads, in one-letter code: Type-1 fimbrial protein, A chain (182 aa).

Residues 1–23 form the signal peptide; it reads MKIKTLAIVVLSALSLSSTAALA. A disulfide bridge connects residues cysteine 44 and cysteine 84.

It belongs to the fimbrial protein family.

The protein resides in the fimbrium. Functionally, fimbriae (also called pili), polar filaments radiating from the surface of the bacterium to a length of 0.5-1.5 micrometers and numbering 100-300 per cell, enable bacteria to colonize the epithelium of specific host organs. The polypeptide is Type-1 fimbrial protein, A chain (fimA) (Escherichia coli (strain K12)).